A 336-amino-acid chain; its full sequence is Ornithine carbamoyltransferase, catabolic (336 aa).

Carbamoyl phosphate-binding positions include 57–60 (STRT), Gln-84, Arg-108, and 135–138 (HPTQ). L-ornithine is bound by residues Asn-168, Asp-232, and 236–237 (SM). Carbamoyl phosphate is bound by residues 274–275 (CL) and Arg-321.

The protein belongs to the aspartate/ornithine carbamoyltransferase superfamily. OTCase family. As to quaternary structure, nonameric or dodecamer (tetramer of trimers).

The protein localises to the cytoplasm. The catalysed reaction is carbamoyl phosphate + L-ornithine = L-citrulline + phosphate + H(+). The protein operates within amino-acid degradation; L-arginine degradation via ADI pathway; carbamoyl phosphate from L-arginine: step 2/2. With respect to regulation, inhibited by 2-aminopentanoic acid (norvaline). Activated by phosphate and nucleoside monophosphates such as AMP, GMP, CMP, UMP. Allosterically inhibited by the polyamines such as spermidine and putrescine. Its function is as follows. Involved in the catabolism of arginine. Catalyzes the phosphorolysis of citrulline, the reverse reaction of the biosynthetic one, yielding ornithine and carbamoyl phosphate which serve to generate ATP from ADP. This catabolic OTCase does not carry out the biosynthetic reaction because of a poor affinity and a marked cooperativity for carbamoyl phosphate. The polypeptide is Ornithine carbamoyltransferase, catabolic (Pseudomonas aeruginosa (strain ATCC 15692 / DSM 22644 / CIP 104116 / JCM 14847 / LMG 12228 / 1C / PRS 101 / PAO1)).